Consider the following 196-residue polypeptide: Ribosome maturation factor RimP (196 aa).

Over residues 131 to 145 (KKKAGKKSQGKKAGK) the composition is skewed to basic residues. Residues 131–153 (KKKAGKKSQGKKAGKKTPQAPVQ) form a disordered region.

The protein belongs to the RimP family.

The protein localises to the cytoplasm. Its function is as follows. Required for maturation of 30S ribosomal subunits. This chain is Ribosome maturation factor RimP, found in Corynebacterium urealyticum (strain ATCC 43042 / DSM 7109).